The sequence spans 338 residues: MVDFKSIIAKVATGATLTRDEATDAFDAMMSGDATPSQMGALLMGLRVRGETVDEITGAVTTMRAKMLPVTAPPDAVDIVGTGGDGSGSVNVSTCASFVVAGCGVTVAKHGNRALSSKSGAADVLAALGVKIDITPEQVGRCVNEAGIGFMFAPTHHPAMKNVGPTRVELATRTIFNLLGPLSNPAGVKRQMIGVFSRQWVQPLAQVLKNLGSEAVWVVHGSDGLDEITLSGTTAVAELKNGEITSFEISPEDAGLPRAPADALKGGDAQANAVALRAVLEGMPGPYRDVALLNAAATLVVAGKARDLKEGVALGTQSIDSGAAEARLKKLIAVSAAA.

Residues glycine 81, 84-85, serine 89, 91-94, 109-117, and alanine 121 contribute to the 5-phospho-alpha-D-ribose 1-diphosphate site; these read GD, NVST, and KHGNRALSS. Glycine 81 is an anthranilate binding site. A Mg(2+)-binding site is contributed by serine 93. Asparagine 112 contributes to the anthranilate binding site. Arginine 167 contributes to the anthranilate binding site. Mg(2+) contacts are provided by aspartate 226 and glutamate 227.

Belongs to the anthranilate phosphoribosyltransferase family. In terms of assembly, homodimer. Mg(2+) is required as a cofactor.

The catalysed reaction is N-(5-phospho-beta-D-ribosyl)anthranilate + diphosphate = 5-phospho-alpha-D-ribose 1-diphosphate + anthranilate. It functions in the pathway amino-acid biosynthesis; L-tryptophan biosynthesis; L-tryptophan from chorismate: step 2/5. Its function is as follows. Catalyzes the transfer of the phosphoribosyl group of 5-phosphorylribose-1-pyrophosphate (PRPP) to anthranilate to yield N-(5'-phosphoribosyl)-anthranilate (PRA). The sequence is that of Anthranilate phosphoribosyltransferase from Rhodopseudomonas palustris (strain TIE-1).